Here is a 707-residue protein sequence, read N- to C-terminus: Serine/threonine protein kinase UL97 (707 aa).

The span at 1 to 14 (MSSALRSRARSASL) shows a compositional bias: low complexity. Disordered stretches follow at residues 1 to 32 (MSSA…PSRA), 115 to 146 (EKED…GDGY), 176 to 199 (FTGG…PLRP), and 231 to 264 (ESQD…EADS). Positions 115 to 127 (EKEDAASDKENLR) are enriched in basic and acidic residues. Over residues 178-188 (GGSDPSDSVSG) the composition is skewed to low complexity. ATP is bound by residues 337–345 (LGQGSFGEV) and Lys-359. Asp-456 serves as the catalytic Proton acceptor.

The protein belongs to the protein kinase superfamily. Tyr protein kinase family. HCMV ganciclovir subfamily. Interacts with UL83. Autophosphorylates on serine and threonine residues.

It localises to the virion. It catalyses the reaction L-seryl-[protein] + ATP = O-phospho-L-seryl-[protein] + ADP + H(+). The enzyme catalyses L-threonyl-[protein] + ATP = O-phospho-L-threonyl-[protein] + ADP + H(+). Serine/threonine protein kinase that plays important roles in several processes including nuclear viral egress, viral replication or regulation of host cell cycle progression. Participates in the acquisition of tegument during virion morphogenesis in the nucleus. Redistributes the host nuclear lamina by phosphorylating cellular Lamins-A/C. Plays a role in viral DNA synthesis by phosphorylating the DNA polymerase processivity factor UL44. Stimulates host cell cycle to support viral DNA synthesis by phosphorylating host retinoblastoma/RB1 protein. Additional substrates have been identified including host EF1D or H2B. Also phosphorylates host SAMHD1 and thereby counteracts its antiviral effect by reducing its dNTP hydrolase activity. This Human cytomegalovirus (strain Towne) (HHV-5) protein is Serine/threonine protein kinase UL97 (UL97).